Here is an 861-residue protein sequence, read N- to C-terminus: Leucine--tRNA ligase (861 aa).

Residues 42-52 carry the 'HIGH' region motif; sequence PYPSGKLHMGH. The 'KMSKS' region motif lies at 619 to 623; sequence KMSKS. Position 622 (K622) interacts with ATP.

The protein belongs to the class-I aminoacyl-tRNA synthetase family.

The protein localises to the cytoplasm. The enzyme catalyses tRNA(Leu) + L-leucine + ATP = L-leucyl-tRNA(Leu) + AMP + diphosphate. This Actinobacillus pleuropneumoniae serotype 5b (strain L20) protein is Leucine--tRNA ligase.